We begin with the raw amino-acid sequence, 173 residues long: DRBM domain-containing protein 340R (173 aa).

Residues 30–102 (NSIGFLNEFC…AFKTIKELNL (73 aa)) form the DRBM domain.

The sequence is that of DRBM domain-containing protein 340R from Invertebrate iridescent virus 6 (IIV-6).